The chain runs to 97 residues: Ferredoxin-3 (97 aa).

2 4Fe-4S ferredoxin-type domains span residues 18-47 (FAES…LKAL) and 65-95 (KVMV…HNPL). The [4Fe-4S] cluster site is built by Cys-27, Cys-30, Cys-33, Cys-37, Cys-75, Cys-78, Cys-81, and Cys-85.

In terms of assembly, homodimer. The cofactor is [4Fe-4S] cluster.

Its function is as follows. Ferredoxins are iron-sulfur proteins that transfer electrons in a wide variety of metabolic reactions. This Nostoc sp. (strain PCC 7120 / SAG 25.82 / UTEX 2576) protein is Ferredoxin-3 (fdxB).